A 342-amino-acid chain; its full sequence is Methylthioribose-1-phosphate isomerase (342 aa).

Residues 49 to 51 (RGA), R86, and Q187 contribute to the substrate site. Catalysis depends on D228, which acts as the Proton donor. Position 238–239 (238–239 (NK)) interacts with substrate.

It belongs to the eIF-2B alpha/beta/delta subunits family. MtnA subfamily.

The catalysed reaction is 5-(methylsulfanyl)-alpha-D-ribose 1-phosphate = 5-(methylsulfanyl)-D-ribulose 1-phosphate. It participates in amino-acid biosynthesis; L-methionine biosynthesis via salvage pathway; L-methionine from S-methyl-5-thio-alpha-D-ribose 1-phosphate: step 1/6. Catalyzes the interconversion of methylthioribose-1-phosphate (MTR-1-P) into methylthioribulose-1-phosphate (MTRu-1-P). The protein is Methylthioribose-1-phosphate isomerase of Serratia proteamaculans (strain 568).